A 706-amino-acid polypeptide reads, in one-letter code: DNA ligase (706 aa).

NAD(+)-binding positions include 47 to 51 (DSEYD), 96 to 97 (SI), and E133. Residue K135 is the N6-AMP-lysine intermediate of the active site. NAD(+) contacts are provided by R156, E192, K323, and K347. Positions 441, 444, 459, and 465 each coordinate Zn(2+). The region spanning 624–706 (VAPKPLSGKT…MRLLASAEAE (83 aa)) is the BRCT domain.

This sequence belongs to the NAD-dependent DNA ligase family. LigA subfamily. Mg(2+) serves as cofactor. Requires Mn(2+) as cofactor.

The catalysed reaction is NAD(+) + (deoxyribonucleotide)n-3'-hydroxyl + 5'-phospho-(deoxyribonucleotide)m = (deoxyribonucleotide)n+m + AMP + beta-nicotinamide D-nucleotide.. In terms of biological role, DNA ligase that catalyzes the formation of phosphodiester linkages between 5'-phosphoryl and 3'-hydroxyl groups in double-stranded DNA using NAD as a coenzyme and as the energy source for the reaction. It is essential for DNA replication and repair of damaged DNA. This chain is DNA ligase, found in Polaromonas sp. (strain JS666 / ATCC BAA-500).